Here is a 362-residue protein sequence, read N- to C-terminus: MRLMVSGGGTGGHIYPALALIKQVKQSEPDSQILYVGTSKGLESKIVPDSGIDFKTINIQGFKRSLSLENFKTIGLFLSSVVKARKMVKEFKPDVVLGTGGYVSGAVVFAASMMGVPTVIHEQNSVVGVTNKFLSKFVKKIAISFEAAASQFPTKKVVLTGNPRATEVAQIKPSGLSQFGLDDKVPTVLIFGGSRGAEKINQVTIDTLEELMERPYQTIFVTGRVHFERLTKDIDLAKYQGKIAILPYIANMPEILSNMEVIVGRAGATSLAEITSLGIPSILIPSPYVTNDHQTKNAMSLVNNDAAEIIKESDLTSEALINTLDTLMLDQKFRNVMAENAKKMGQPRAAENLYDVLKSVSK.

Residues Thr-10–Gly-12, Asn-124, Ser-194, Ile-249, and Gln-294 each bind UDP-N-acetyl-alpha-D-glucosamine.

It belongs to the glycosyltransferase 28 family. MurG subfamily.

The protein resides in the cell membrane. It carries out the reaction Mur2Ac(oyl-L-Ala-gamma-D-Glu-L-Lys-D-Ala-D-Ala)-di-trans,octa-cis-undecaprenyl diphosphate + UDP-N-acetyl-alpha-D-glucosamine = beta-D-GlcNAc-(1-&gt;4)-Mur2Ac(oyl-L-Ala-gamma-D-Glu-L-Lys-D-Ala-D-Ala)-di-trans,octa-cis-undecaprenyl diphosphate + UDP + H(+). It participates in cell wall biogenesis; peptidoglycan biosynthesis. Functionally, cell wall formation. Catalyzes the transfer of a GlcNAc subunit on undecaprenyl-pyrophosphoryl-MurNAc-pentapeptide (lipid intermediate I) to form undecaprenyl-pyrophosphoryl-MurNAc-(pentapeptide)GlcNAc (lipid intermediate II). The protein is UDP-N-acetylglucosamine--N-acetylmuramyl-(pentapeptide) pyrophosphoryl-undecaprenol N-acetylglucosamine transferase of Pediococcus pentosaceus (strain ATCC 25745 / CCUG 21536 / LMG 10740 / 183-1w).